The sequence spans 182 residues: Adenine phosphoribosyltransferase (182 aa).

It belongs to the purine/pyrimidine phosphoribosyltransferase family. In terms of assembly, homodimer.

It localises to the cytoplasm. It catalyses the reaction AMP + diphosphate = 5-phospho-alpha-D-ribose 1-diphosphate + adenine. It functions in the pathway purine metabolism; AMP biosynthesis via salvage pathway; AMP from adenine: step 1/1. In terms of biological role, catalyzes a salvage reaction resulting in the formation of AMP, that is energically less costly than de novo synthesis. The polypeptide is Adenine phosphoribosyltransferase (Campylobacter jejuni subsp. jejuni serotype O:23/36 (strain 81-176)).